The following is a 199-amino-acid chain: Mediator of RNA polymerase II transcription subunit 7 (199 aa).

This sequence belongs to the Mediator complex subunit 7 family. In terms of assembly, component of the Mediator complex.

It is found in the nucleus. In terms of biological role, component of the Mediator complex, a coactivator involved in the regulated transcription of nearly all RNA polymerase II-dependent genes. Mediator functions as a bridge to convey information from gene-specific regulatory proteins to the basal RNA polymerase II transcription machinery. Mediator is recruited to promoters by direct interactions with regulatory proteins and serves as a scaffold for the assembly of a functional preinitiation complex with RNA polymerase II and the general transcription factors. The polypeptide is Mediator of RNA polymerase II transcription subunit 7 (MED7) (Eremothecium gossypii (strain ATCC 10895 / CBS 109.51 / FGSC 9923 / NRRL Y-1056) (Yeast)).